Here is a 300-residue protein sequence, read N- to C-terminus: NADH-cytochrome b5 reductase 1 (300 aa).

The helical transmembrane segment at 8 to 28 (PLVVFATVATIIISFVTLYFF) threads the bilayer. The span at 34-45 (SSTTSSSSSSSS) shows a compositional bias: low complexity. The segment at 34 to 54 (SSTTSSSSSSSSKSKKGSPAL) is disordered. The 104-residue stretch at 57 to 160 (DKFQKFPLIS…RGPKGFFTYT (104 aa)) folds into the FAD-binding FR-type domain. Residues 140 to 155 (AEKQ…GPKG) and 166 to 198 (SLGL…KVHL) each bind FAD.

The protein belongs to the flavoprotein pyridine nucleotide cytochrome reductase family. In terms of assembly, monomer. Component of the 2-(3-amino-3-carboxypropyl)histidine synthase complex composed of DPH1, DPH2, DPH3 and a NADH-dependent reductase, predominantly CBR1. The cofactor is FAD.

It is found in the mitochondrion outer membrane. It carries out the reaction 2 Fe(III)-[cytochrome b5] + NADH = 2 Fe(II)-[cytochrome b5] + NAD(+) + H(+). The catalysed reaction is 2 Fe(3+)-[Dph3] + NADH = 2 Fe(2+)-[Dph3] + NAD(+) + H(+). The protein operates within protein modification; peptidyl-diphthamide biosynthesis. Functionally, NADH-dependent reductase for DPH3 and cytochrome b5. Required for the first step of diphthamide biosynthesis, a post-translational modification of histidine which occurs in elongation factor 2. DPH1 and DPH2 transfer a 3-amino-3-carboxypropyl (ACP) group from S-adenosyl-L-methionine (SAM) to a histidine residue, the reaction is assisted by a reduction system comprising DPH3 and a NADH-dependent reductase, predominantly CBR1. By reducing DPH3, also involved in the formation of the tRNA wobble base modification mcm5s 2U (5-methoxycarbonylmethyl-2-thiouridine), mediated by the elongator complex. The cytochrome b5/NADH cytochrome b5 reductase electron transfer system supports the catalytic activity of several sterol biosynthetic enzymes. This chain is NADH-cytochrome b5 reductase 1 (CBR1), found in Lodderomyces elongisporus (strain ATCC 11503 / CBS 2605 / JCM 1781 / NBRC 1676 / NRRL YB-4239) (Yeast).